A 169-amino-acid polypeptide reads, in one-letter code: Peptide deformylase (169 aa).

The Fe cation site is built by Cys-93 and His-135. Glu-136 is an active-site residue. Fe cation is bound at residue His-139.

The protein belongs to the polypeptide deformylase family. Fe(2+) serves as cofactor.

It catalyses the reaction N-terminal N-formyl-L-methionyl-[peptide] + H2O = N-terminal L-methionyl-[peptide] + formate. Its function is as follows. Removes the formyl group from the N-terminal Met of newly synthesized proteins. Requires at least a dipeptide for an efficient rate of reaction. N-terminal L-methionine is a prerequisite for activity but the enzyme has broad specificity at other positions. This chain is Peptide deformylase, found in Aquifex aeolicus (strain VF5).